The sequence spans 231 residues: Aminodeoxyfutalosine nucleosidase (231 aa).

The active-site Proton acceptor is the Glu-14. Substrate contacts are provided by residues Gly-81, Val-155, and 175 to 176; that span reads ME. Asp-199 functions as the Proton donor in the catalytic mechanism.

Belongs to the PNP/UDP phosphorylase family. As to quaternary structure, homodimer.

It carries out the reaction 6-amino-6-deoxyfutalosine + H2O = dehypoxanthine futalosine + adenine. It catalyses the reaction S-adenosyl-L-homocysteine + H2O = S-(5-deoxy-D-ribos-5-yl)-L-homocysteine + adenine. The enzyme catalyses S-methyl-5'-thioadenosine + H2O = 5-(methylsulfanyl)-D-ribose + adenine. The catalysed reaction is 5'-deoxyadenosine + H2O = 5-deoxy-D-ribose + adenine. It functions in the pathway quinol/quinone metabolism; menaquinone biosynthesis. The protein operates within amino-acid biosynthesis; L-methionine biosynthesis via salvage pathway; S-methyl-5-thio-alpha-D-ribose 1-phosphate from S-methyl-5'-thioadenosine (hydrolase route): step 1/2. In terms of biological role, catalyzes the direct conversion of aminodeoxyfutalosine (AFL) into dehypoxanthine futalosine (DHFL) and adenine via the hydrolysis of the N-glycosidic bond; this reaction seems to represent an essential step in the menaquinone biosynthesis pathway in Helicobacter species. Can also probably catalyzes the hydrolysis of 5'-methylthioadenosine (MTA) and S-adenosylhomocysteine (SAH) to adenine and the corresponding thioribose, 5'-methylthioribose and S-ribosylhomocysteine, respectively. These other activities highlight the tremendous versatility of the enzyme, which also plays key roles in S-adenosylmethionine recycling and in the biosynthesis of the quorum-sensing molecule autoinducer-2. Does not act on futalosine (FL) as substrate. This chain is Aminodeoxyfutalosine nucleosidase (mtnN), found in Helicobacter pylori (strain ATCC 700392 / 26695) (Campylobacter pylori).